We begin with the raw amino-acid sequence, 1050 residues long: Nuclear pore complex-interacting protein family member B3 (1050 aa).

The chain crosses the membrane as a helical span at residues 63-87 (VIIAFPTSYKVVITLWIVYLWVSLL). Disordered regions lie at residues 241-262 (NRMGHQPPPPTQQHSITDNSLS), 290-574 (LTPL…NIKT), and 785-1050 (ERLR…RRLS). The span at 252–262 (QQHSITDNSLS) shows a compositional bias: polar residues. The span at 349-359 (PLPPSALPSAP) shows a compositional bias: pro residues. 7 stretches are compositionally biased toward basic and acidic residues: residues 406-416 (DNIKTPAERLR), 448-458 (DNIKTPAERLR), 490-500 (DNIKTPAERLR), 528-538 (DNIKTPAERLR), 820-830 (DNIKTPAERLR), 862-872 (DNIKTPAERLR), and 904-914 (DNIKTPAERLR).

The protein belongs to the NPIP family.

The protein resides in the membrane. In Homo sapiens (Human), this protein is Nuclear pore complex-interacting protein family member B3 (NPIPB3).